A 134-amino-acid polypeptide reads, in one-letter code: Small ribosomal subunit protein bS16 (134 aa).

The segment at G80 to E134 is disordered. The span at A115–E134 shows a compositional bias: low complexity.

The protein belongs to the bacterial ribosomal protein bS16 family.

In Brucella anthropi (strain ATCC 49188 / DSM 6882 / CCUG 24695 / JCM 21032 / LMG 3331 / NBRC 15819 / NCTC 12168 / Alc 37) (Ochrobactrum anthropi), this protein is Small ribosomal subunit protein bS16.